Consider the following 763-residue polypeptide: MSELLSVALFLASVLIYAWKAGRNTWWFAATLTVLGLFVILNITLYASDYFTGDGINDAVLYTLTNSLTGAGVGKYILPGIGIALALVAVFGALGWVLRRRRHHPHHVGYSLLALLLALGSVDASPAFRQITELVKSQMRDGDPDFAVYYKEPAKTIPNPKLNLVYIYGESLERTYFDNDAFPNLTPELGALKNEGLDFSHTMQLPGTDYTIAGMVASQCGIPLFAPFEGNASASVSSFFPQNICLGDILKNSGYQNYFVQGANLRFAGKDVFLKSHGFDHLYGAEELKTVVADPSYRNDWGFYDDTVLDEAWKKFEALSRSGQRFSLFTLTVDTHHPDGFISRTCNRKRYDYDGKPNQSFSAVSCSQENIAEFINKIKASPWFKDTVIVVSSDHLAMNNTAWKYLNKQDRNNLFFILRGDKPQQETLAVKRNTMDNGATVLDILGGDNFIGLGRSSLSGQSLSEVFLNVKEKVLAMKPDIIRLWNFPKEIKDFTVDRDKNMIAFSGSHFRLPLLLRVSDKRVEPLPESEYSAPLRFQLADFAPRDNFVWIDRCYKMAQLWAPALALSTDWCVSQGQLGGQQTVQHVDKAQWKGKTAFKETVIDVTRYQGNVDTLKIVDNDIRYKADSFIFNVAGAPEEVKQFSGISRPESWGRWSNAQLGDEVKIEYKAPLPKKFDLVITAKAFGDNANRPIPVRVGNEEQTLVLGHDVSTITLHFNNPTDANTLVIAPPAPVSTNEGNILGHSPRKLGIGMVEIKVVNVES.

Transmembrane regions (helical) follow at residues 1–21, 26–46, 77–97, and 108–128; these read MSELLSVALFLASVLIYAWKA, WWFAATLTVLGLFVILNITLY, ILPGIGIALALVAVFGALGWV, and VGYSLLALLLALGSVDASPAF.

It belongs to the OpgB family.

It is found in the cell inner membrane. It carries out the reaction a phosphatidylglycerol + a membrane-derived-oligosaccharide D-glucose = a 1,2-diacyl-sn-glycerol + a membrane-derived-oligosaccharide 6-(glycerophospho)-D-glucose.. It participates in glycan metabolism; osmoregulated periplasmic glucan (OPG) biosynthesis. Its function is as follows. Transfers a phosphoglycerol residue from phosphatidylglycerol to the membrane-bound nascent glucan backbones. The sequence is that of Phosphoglycerol transferase I from Salmonella dublin (strain CT_02021853).